The chain runs to 352 residues: uncharacterized protein (352 aa).

Residues 285 to 352 (FQHLRNARER…IKSEIRRLQR (68 aa)) adopt a coiled-coil conformation.

This is an uncharacterized protein from Emericella nidulans (strain FGSC A4 / ATCC 38163 / CBS 112.46 / NRRL 194 / M139) (Aspergillus nidulans).